Consider the following 558-residue polypeptide: Ubiquitin carboxyl-terminal hydrolase 30 homolog (558 aa).

A helical membrane pass occupies residues 6 to 26; that stretch reads ILMAAGVTVAAVVGAFVFWGP. Residues 39 to 550 enclose the USP domain; the sequence is AGLHNFGLTC…PAYLLFYDRG (512 aa). C48 functions as the Nucleophile in the catalytic mechanism. The interval 267–300 is disordered; that stretch reads LATPMLGGERSSRPRLPQSQQQQDEGLNRRVSSS. Residues 280-289 are compositionally biased toward low complexity; sequence PRLPQSQQQQ. The active-site Proton acceptor is H506.

Belongs to the peptidase C19 family.

It is found in the mitochondrion outer membrane. The catalysed reaction is Thiol-dependent hydrolysis of ester, thioester, amide, peptide and isopeptide bonds formed by the C-terminal Gly of ubiquitin (a 76-residue protein attached to proteins as an intracellular targeting signal).. Its function is as follows. Deubiquitinating enzyme that acts as a key inhibitor of mitophagy by counteracting the action of parkin (park). This chain is Ubiquitin carboxyl-terminal hydrolase 30 homolog, found in Drosophila melanogaster (Fruit fly).